Consider the following 591-residue polypeptide: Aspartate--tRNA(Asp/Asn) ligase (591 aa).

An L-aspartate-binding site is contributed by Glu176. An aspartate region spans residues Gln200–Lys203. Arg222 serves as a coordination point for L-aspartate. Residues Arg222–Glu224 and Gln231 each bind ATP. His450 contributes to the L-aspartate binding site. Glu484 contacts ATP. Arg491 contributes to the L-aspartate binding site. Gly536–Arg539 is an ATP binding site.

It belongs to the class-II aminoacyl-tRNA synthetase family. Type 1 subfamily. As to quaternary structure, homodimer.

The protein localises to the cytoplasm. It catalyses the reaction tRNA(Asx) + L-aspartate + ATP = L-aspartyl-tRNA(Asx) + AMP + diphosphate. In terms of biological role, aspartyl-tRNA synthetase with relaxed tRNA specificity since it is able to aspartylate not only its cognate tRNA(Asp) but also tRNA(Asn). Reaction proceeds in two steps: L-aspartate is first activated by ATP to form Asp-AMP and then transferred to the acceptor end of tRNA(Asp/Asn). This is Aspartate--tRNA(Asp/Asn) ligase from Bacillus anthracis (strain A0248).